Consider the following 225-residue polypeptide: MIGKFIVFEGVEGGGKTTQIELLQDWLLETGESRQILPKSIDLDLEVVITREPGGTKLGKALRELLLSPDVLAEKIQETSELLLYAADRAQHIEALIKPCLERGTIVLCDRFIDSTIAYQGYGRGLDVELIKQLNYIATGGLKSDLTFWLDIDVEIGLARAKSRGNFDRMEQANIEFHRRVQQGYQELAKNNSLIVRIDANLTREKVQQQIQAIIMQKLVEWKYI.

10–17 (GVEGGGKT) is a binding site for ATP.

This sequence belongs to the thymidylate kinase family.

The catalysed reaction is dTMP + ATP = dTDP + ADP. Phosphorylation of dTMP to form dTDP in both de novo and salvage pathways of dTTP synthesis. The protein is Thymidylate kinase of Trichodesmium erythraeum (strain IMS101).